The sequence spans 305 residues: Mitochondrial uncoupling protein 2 (305 aa).

Solcar repeat units follow at residues I10 to L104, I114 to T205, and D214 to V297. 6 helical membrane-spanning segments follow: residues F16–A36, I73–L93, I120–V140, T179–Y199, L220–V240, and Y270–T290.

The protein belongs to the mitochondrial carrier (TC 2.A.29) family.

It is found in the mitochondrion inner membrane. In terms of biological role, PUMPS are mitochondrial transporter proteins that create proton leaks across the inner mitochondrial membrane, thus uncoupling oxidative phosphorylation. This leads to a decrease in the efficiency of oxidative phosphorylation and an increase in heat production. May be involved in protecting plant cells against oxidative stress damage. The polypeptide is Mitochondrial uncoupling protein 2 (PUMP2) (Arabidopsis thaliana (Mouse-ear cress)).